The sequence spans 398 residues: MEQPKKVADRYLKREVLGQGTYGVVFKATDTKNGETVAIKKIRLGKEKEGVNVTALREIKLLKELKHPHIIELIDAFPHKENLHIVFEFMETDLEAVIRDRNLYLSPGDVKSYLQMILKGLEYCHGKWVLHRDMKPNNLLIGPNGQLKLADFGLARIFGSPGRKFTHQVFARWYRAPELLFGAKQYDGAVDVWAAGCIFAELLLRRPFLQGNSDIDQLSKIFAAFGTPKADQWPDMICLPDYVEYQFVPAPSLRSLLPTVSEDALDLLSKMFTYDPKSRISIQQALKHRYFTSAPSPTDPLKLPRPVSKQDAKSSDSKLEAIKVLSPAHKFRRVMPDRGKSGNGFKDQSVDVMRQASHDGQAPMSLDFTILAERPPNRPTITSADRSHLKRKLDLEFL.

Residues 11 to 291 (YLKREVLGQG…IQQALKHRYF (281 aa)) form the Protein kinase domain. Residues 17 to 25 (LGQGTYGVV) and Lys40 contribute to the ATP site. Phosphotyrosine is present on Tyr22. Asp133 acts as the Proton acceptor in catalysis. Position 160 is a phosphoserine (Ser160). Thr166 is subject to Phosphothreonine. The interval 296 to 318 (SPTDPLKLPRPVSKQDAKSSDSK) is disordered. The span at 308–318 (SKQDAKSSDSK) shows a compositional bias: basic and acidic residues.

Belongs to the protein kinase superfamily. CMGC Ser/Thr protein kinase family. CDC2/CDKX subfamily. In terms of processing, autophosphorylated. As to expression, expressed at low levels in suspension cell culture, but not in plant organs.

Its subcellular location is the nucleus. The catalysed reaction is L-seryl-[protein] + ATP = O-phospho-L-seryl-[protein] + ADP + H(+). It catalyses the reaction L-threonyl-[protein] + ATP = O-phospho-L-threonyl-[protein] + ADP + H(+). It carries out the reaction [DNA-directed RNA polymerase] + ATP = phospho-[DNA-directed RNA polymerase] + ADP + H(+). This chain is Cyclin-dependent kinase D-1 (CDKD-1), found in Arabidopsis thaliana (Mouse-ear cress).